Here is a 273-residue protein sequence, read N- to C-terminus: Esterase pigG (273 aa).

Catalysis depends on charge relay system residues Ser-122, Asp-215, and His-243.

Belongs to the LovG family.

It functions in the pathway secondary metabolite biosynthesis. In terms of biological role, esterase; part of the gene cluster that mediates the biosynthesis of azaphilone pigments (MonAzPs), a complex mixture of compounds with a common azaphilone skeleton very widely used as food colorants. Within the pathway, pigG may assist the nrPKS pigA in the biosynthesis of the hexaketide precursor. The first step of the pathway is performed by the nrPKS pigA that forms the hexaketide precursor from successive condensations of five malonyl-CoA units, with a simple acetyl-CoA starter unit. The role of esterase pigG is not clear, but it may play at most a supplementary role in the formation of the benzaldehyde produced by the pigA nrPKS. This very reactive benzaldehyde is intercepted by the pigC ketoreductase that to provide the first stable enzyme-free MonAzPs intermediate, 6-(4-hydroxy-2-oxopentyl)-3-methyl-2,4-dioxocyclohexane carbaldehyde, also known as M7PKS-1. The FAD-dependent monooxygenase pigN hydroxylates M7PKS-1 at C-4, which triggers the formation of the pyran ring. PigJ, pigK and pigD are involved in the acetylation of the pyran ring. PigJ and pigK form the two subunits of a dedicated fungal FAS that produces the side chain fatty acyl moiety of MonAzPs and pigD transfers the fatty acyl chain to the C-4 alcohol. PigM and pigO are involved in the elimination of the omega-1 alcohol. PigM acts as an O-acetyltransferase that synthesizes the putative O-11 acetyl intermediate whereas pigO eliminates acetic acid to yield an intermediate with a C10(11) double bond. The dehydration of the C-11 alcohol followed by the reduction of the C6(7) double bond by the NAD(P)H-dependent oxidoreductase pigE increases the electrophilicity of the C-5 ketone of the resulting acyl benzopyran. This in turn sets up the C-5 ketone for an intramolecular Knoevenagel aldol condensation with the C-20 enol of the side chain. This condensation affords the characteristic linear tricyclic carbon skeletons of the yellow pigments that serve as the common precursors for the classical yellow pigments monascin and ankaflavin, orange pigments rubopunctatin and monascorubrin, and red pigments ribropunctamine and monascorubramine. The FAD-dependent oxidoreductase pigF is especially invoved in the biosynthesis of orange and red pigments via desaturation of C6(7). The chain is Esterase pigG from Monascus ruber (Mold).